The primary structure comprises 262 residues: Putative cysteine-rich repeat secretory protein 24 (262 aa).

The first 29 residues, 1–29 (MSLSSSVTKHLISASILAIVAMQLPSVHS), serve as a signal peptide directing secretion. Gnk2-homologous domains lie at 39–141 (YLHH…SIYT) and 147–259 (YKNN…LYPF).

This sequence belongs to the cysteine-rich repeat secretory protein family.

Its subcellular location is the secreted. This chain is Putative cysteine-rich repeat secretory protein 24 (CRRSP24), found in Arabidopsis thaliana (Mouse-ear cress).